The following is a 393-amino-acid chain: Formate-dependent phosphoribosylglycinamide formyltransferase (393 aa).

Residues 22–23 (EL) and glutamate 82 contribute to the N(1)-(5-phospho-beta-D-ribosyl)glycinamide site. ATP contacts are provided by residues arginine 114, lysine 155, 160–165 (SSGKGQ), 195–198 (EGLV), and glutamate 203. In terms of domain architecture, ATP-grasp spans 119–308 (RLAAETLQLP…EFALHVRAFL (190 aa)). Mg(2+)-binding residues include glutamate 267 and glutamate 279. Residues aspartate 286, lysine 355, and 362-363 (RR) each bind N(1)-(5-phospho-beta-D-ribosyl)glycinamide.

The protein belongs to the PurK/PurT family. Homodimer.

The catalysed reaction is N(1)-(5-phospho-beta-D-ribosyl)glycinamide + formate + ATP = N(2)-formyl-N(1)-(5-phospho-beta-D-ribosyl)glycinamide + ADP + phosphate + H(+). The protein operates within purine metabolism; IMP biosynthesis via de novo pathway; N(2)-formyl-N(1)-(5-phospho-D-ribosyl)glycinamide from N(1)-(5-phospho-D-ribosyl)glycinamide (formate route): step 1/1. Functionally, involved in the de novo purine biosynthesis. Catalyzes the transfer of formate to 5-phospho-ribosyl-glycinamide (GAR), producing 5-phospho-ribosyl-N-formylglycinamide (FGAR). Formate is provided by PurU via hydrolysis of 10-formyl-tetrahydrofolate. This chain is Formate-dependent phosphoribosylglycinamide formyltransferase, found in Yersinia pseudotuberculosis serotype IB (strain PB1/+).